The chain runs to 98 residues: NADH-ubiquinone oxidoreductase chain 4L (98 aa).

3 helical membrane passes run 2–22 (PSIS…MLMF), 29–49 (SLLC…LIIL), and 61–81 (ILLL…LVMI).

Belongs to the complex I subunit 4L family. As to quaternary structure, core subunit of respiratory chain NADH dehydrogenase (Complex I) which is composed of 45 different subunits.

It is found in the mitochondrion inner membrane. The enzyme catalyses a ubiquinone + NADH + 5 H(+)(in) = a ubiquinol + NAD(+) + 4 H(+)(out). Core subunit of the mitochondrial membrane respiratory chain NADH dehydrogenase (Complex I) which catalyzes electron transfer from NADH through the respiratory chain, using ubiquinone as an electron acceptor. Part of the enzyme membrane arm which is embedded in the lipid bilayer and involved in proton translocation. The protein is NADH-ubiquinone oxidoreductase chain 4L (MT-ND4L) of Mirza coquereli (Coquerel's giant mouse lemur).